The sequence spans 5141 residues: MLLPALLFGMLWAPANGHWCEQIETVHVEEEVTPRREDLVPCTSLYHYSRLGWKLDLSWGGHVGLTRPPALGLCAIYKPPETRPATWNRTVRACCPGWGGIHCTEALAEASPKGHCFVTWHCQPLAGSANSSAGSLEECCAQPWGHSWWNSSSQMCLSCSGQHRPGNASSEGLLQPLAGAVGQLWSQRQRPSATCATWSGFHYQTFDGQHYHFLGQCTYLLAGAMDSTWAVHLRPSVHCPQPRQCWLVQVIMGPEEVLIQDGEVSVKGQPVPVGESQLLHGMSLQWQGDWLVLSGGLGVVVRLDRSSSIIISVDHEFWGRTQGLCGLYNGRPEDDFVEPGGGLAMLAATFGNSWRLPGYEPGCLDTVEVARGCEGLLEGTLTGLEAGKLQAQAQDLCHQLLEDPFSQCHGQVPPDEYHETCLFAYCVGATAGSGPEEQVKAVCATFANYAQACARQHIYVHWRKPGFCERLCPGGQLYSDCISSCPPSCSAVAQGEEGSCGKECVSGCECPTGLFWDGALCVPAAHCPCYYRRQRYAPGDTVKQQCNPCVCQDGRWHCAQAPCPAECAVGGDGHYCTFDGRSFSFRGNPGCQYSLVQDSVKGQLLVVLEHGACETGSCLHALSAFLGKTHIQLRYSGAVLVDGQDVDLPWIGAEGFNVSHASSTFLLLRWPGAWVLWGVADPAVYITLDPRHAYQVQGLCGTFTWKQQDDFLTPAGDIETSVTAFASKFQVSGDGRCPLVDNTPLSSCSTYSQRLAFAEAACAALHGHAFQECHGLVEREPFRLRCLESMCSCAPGRDCLCSVLSAYAHHCAQEGVLLQWRNETLCSVPCPGGQVYQECAPACGHYCGEPEDCKELGSCVAGCNCPPGLLWDLEGQCVPPSMCPCQLGGHRYAFNTTTTLKDCSHCICQERGLWNCIAHHCPRQWALCPQELIYAPGACLLTCDSLGANHSCLAGSTDGCVCPSGTVLLDKHCVSPDLCPCRHNGQWYPPNATIQEDCNICVCQNQRWHCTGQRCSGWCQASGAPHYVTFDGLVFTFPGACEYLLVREAGGRFSVSIQNLPCGASGLTCTKALAVRLDSTVVHMLRGQAVTVNGVSIKLPKVYTGPGLSLHHAGLFLLLTTRLGLTLLWDGGTRVLVQLSPHFHGRVTGLCGNFDGDVSNDLRSRQGVLEPTAELTAHSWRLNPLCPEPGDLPHPCSVNAHRVNWARAHCEVILQPIFAPCHTEVPPQQYYEWCVYDACGCDTGGDCECLCSAIATYADECARHRHHVRWRSQELCPLQCEGGQVYEPCGSTCPPTCHDHHPELRWHCQAITCVEGCFCPEGTLLHGGTCVELTDCPCEWQGSFFPPGAVLQKDCGNCTCQESQWHCNPSGAPCEEMEPGCAEGEALCRESGHCVPLEWLCDNQDDCGDGSDEEGCDTSVCGEGQMSCQSGRCLPLSLICDGQDDCGDGTDEQGCLCPQGFLACADGRCLPPALLCDGHPDCLDAADEESCLGWVSCTSGEVSCVDGPCIRTIQLCDGVWDCPDGADEGPVHCSSPSLPTPPAGIGQNPSTSSPDTSPSPVGSASPASPCSLSEFQCNSGECTPRGWRCDREEDCTDGSDELDCGGPCKLYQMPCAHGPHCLSPGQLCDGVAQCPDGSDEDPDVCEERSASGGPNGTAVPCPEFSCPNGTCIDFLLVCDGSPDCELADETEPSLDEQGCGTWGSWGPWEPCSQTCGPGIQSRNRNCSISSLHVLQNCPGLQHQSQSCFTEACPVDGEWSSWSLWSPCSEPCGGTMTRHRQCRPPQNGGQDCALLPGSTHSTHQTSPCPQEGCLNVTCFGELVFRPCAPCPLTCDDISGEAVCSPDRPCSSPGCWCPEGKVLGTEGRCVRPRQCPCLVDGIRYWPGQRIKMDCQLCFCQDGQPHRCRPNPECAVDCGWSSWSPWAECLGPCSSQSLQWSFRSPNNPRLSGHGRQCRGIHRKARRCQTEPCEGCEQWGLTYHVGERWRGGPCTVCECLHRSITRCSPYCPIGSCPQSWVLVEGMGESCCHCALPGKNQTMIPVTTPAPVPTPSPQIGASLVTYVLPPMSDACYSPLGLAGLPTWAPSQPLEHSTRAAPVEAPTAGPGPREDAYAEWHTQPLYLQLDLLWPRNLTGIMVQRAGSSAAYISNLSLQFSSDGLQWHSVLNSLSSTLPPPKPSPESSNHMVPEVWTFDQMVQARYIRVWPHGSHLRDNNQQDIFLWVELLGCKPVPPLAPLCPGTRHRCANGDCALKGGPCDGAVDCEDGSDEEGCGPLRASTASRVHSTARTPALSPTQPGKFPFHPREGLADMEHQQPKQESPMPSAGVSPSASEGLLPVSGQSMQTLTTTSTFPPGLKSLHPGMAAVTVHSPHSVMPGTPVGQSVSPRPFPLMRCGPGQVPCDVLGCVEQEQLCDGREDCLDGSDEQHCASPEPFTVPTTALPGLPASRALCSPSQLSCGSGECLPLEHRCDLQVNCQDGSDEDDCVDCVLAPWSGWSDCSRSCGLGLIFQHRELLRPPLPGGSCLLDQLRSQPCFVQACPVAGAWAKWGPWEPCSVSCGGGHQSRQRSCVDPPPKNGGAPCPGPSHEKVLCNLQLCPGDTDCEPGRVHVNAELCQKGLLPPCPPSCLDPEANRSCSGHCVEGCRCPPGLFLQDSHCLPLSECPCLVGQKLMQPGLAFLLDNCSQCICESGILLCKPAACSQSCGWSAWSPWTACDHSCGSGVRARFRSPTNPPAAFGGSPCEGDRQELQACYTDCGTDIPGWTPWTSWSSCSQSCLVPGGDPGRRQRSRLCPSSRDTFCPGEATQEEPCSPSLCPVPSAWGLWASWSACSASCNGGIQTRGRSCSGSAPGNPVCLGPHTQTRDCNVHPCTAQCPGNMVFRSAEKCLEEGGPCPQLCLAQDPGVECTGSCAPGCSCPPGLFLHNASCLPRSQCPCQLHGQLYAPGAVARLDCNNCTCSSGEMVCTSERCPVACGWSPWTPWSPCSQSCNVGIRRRFRAGTAPPAAFGGAECRGPNLDAEFCTLRPCQGPGAAWSSWTPCSVPCGGGYRNRTQGSGRHSPVEFSTCSLQPCAGPVPGVCPKDQQWLDCAQGPASCAHLSTPREANQTCHPGCYCLSGMLLLNNVCVPAQDCPCAHRGRLHSPGSAVILPCENCSCVSGLITNCSSWPCEEGQPAWSSWTPWSVCSASCSPARRHRRRFCVRPSTTAPFSLDLPTTVAAPTMLCPGPEAEEEPCLLPGCNQAGVWGPWSPWSGCSRSCGGGLRSRTRACDKPPPQGLGDFCEGPQAQGEACQAQPCPVANCSTIEGAEYSPCGPPCPRSCDDLVHCMWHCQPGCYCPPGKVLSADGAICVQPHHCSCLDLLTGKRHHPGSQLMRPDGCNHCTCMEGRLNCTDLPCQVSGDWCPWSEWTACSQPCRGQTRTRSRACVCPAPQHGGAPCPEEAGETGVQHQMEACPNPTACPVDGAWSPWGSWSPCDACLGQSYRSRMCSHPPPSDGGTPCLGGHQQSRPCRNSSTPCTDCGGGQDLLPCGQPCPHSCQDLSLGSTCQPGSSGCQSGCGCPPGQLSQDGLCVFPADCHCHFQPKAMGIPENQSRSVGSALSSWESLEPGEVVTGPCDNCTCVAGVLQCHEVPSCPGPGIWSSWGPWEKCSVPCGGGEQLRSRQCARPPCPGLAQQSRTCHIHVCRETGCPAGRLYRECQPSEGCPFSCAHVTGQVACFSESCEEGCHCPEGTFQHHSACVQECPCVLTVSLLQELGVASTALRSYPVLLGDEGQPLGPGDELDPGQMLQTVCGNCSCVHGKLSCSMEECSRVRGYFGPWGMWSLCSHSCGGLGTRTRTRQCVLPTLAPAGLSCRGPLQDLEYCFSPECPGTAGSTVEPVTGLAGGWGPWSPWSPCSHSCTDLTHPAWRSRTRLCLANCTVGDSSQERPCNLPSCTTLPLCPGPGCGSENCFWTSWAPWEPCSRSCGVGQQRRLRAYHPPGPGGHWCPDILTAYQERRFCNLRACPVPGGWSHWSPWSWCDRSCGGGRSLRSRSCSSPPPKNGGASCVGERHHVRSCNPMPCEKDCPAGMEMVSCANRCPYSCSDLQEAVMCQEDQACQLGCRCSEGFLEQDGGCVPVGHCECTDAQGRSWAPGSQHQDACNNCSCQAGQLSCTAQPCPPPAHCAWSHWSAWSACSHSCGPHGQQSRFRSSTSGSWALECQKEQSQSQPCPEDPCPPLCLHEAHLHVLGDNWLHGECQQCSCTPEGVICKDTDCAVPGGWTLWSSWSYCSVSCGGGSQVRTRSCMVSAPQHGSPSCQGPDTQTQHCGQQLCLQLLEICSWGPWGPCSRSCGTGLASRSGSCPCLLTKEDSECNDTFSGLDTQACYPGPCQEDCMWSDWSSWTRCSCKILVQQRYRHQVPAPGQAGEGTLCTGLDGHFRPCAIGNCSEDSCLPPFEFQSCGSPCAGLCATHLSHQLCQDLPPCQPGCYCPMGLLEQDGGCILPEQCNCWHTSGEGARVTLAPGHRLQLGCKECVCQSGELQCSSQGCEGLLPLTGWSEWSPCGPCLPQSALAPDSRTALEVHWPLNTSVTLLASEQYRHRLCLDPETGRPWAGDPALCTVPLSQQRLCSDPGACHDTCQWGPWGPWSPCQVPCSGGFKLRWREASDNSVGECRGPWAQTESCNMGSCPGESCETRDTVFTLDCANQCPRSCADLWEGVQCLQGPCSPGCRCPPGQLVQDGHCVPISSCRCGLPSANASWELAPTQVVQLDCHNCTCINGTLMCPYPECPVLGPWSPWSECSAVCGGGTMVRYRSCEEHPDSAPCQALDMEQRVECNLQTCPECPPGQVLSTCATLCPSFCSHLWPGTICVREPCQLGCGCPGGQLLHSGTCIPPEACPCTRLSLPWGLTLPLEEQAQELPSGTVLTWNCTHCTCQGGVFTCSHTDCQECPPGEILQLGELRPCEKTCLEMNKTQAWSNCTEAQVPGCVCQLGHFRSHTGLCVPEDHCECWHHGSPHLPGSEWQEACESCRCLHGKSVCTQHCPELSCAQGEVVVQEPGSCCPICQQDTLEEEPVSCRHLTELRNLTKGPCHLDQVEVSYCSGHCRSSTNVMTEEPYLQSQCDCCSYRLDPDSPVRILNLLCPDGRTEPVLLPVIHNCHCSACQGGEFSKH.

Residues 1–17 form the signal peptide; that stretch reads MLLPALLFGMLWAPANG. The EMI domain occupies 18 to 102; the sequence is HWCEQIETVH…ACCPGWGGIH (85 aa). N-linked (GlcNAc...) asparagine glycosylation is found at asparagine 88, asparagine 130, asparagine 150, and asparagine 167. A VWFD 1 domain is found at 193–364; the sequence is ATCATWSGFH…RLPGYEPGCL (172 aa). 3 disulfides stabilise this stretch: cysteine 195/cysteine 325, cysteine 217/cysteine 363, and cysteine 239/cysteine 245. Residues 472–527 form the TIL 1 domain; it reads CPGGQLYSDCISSCPPSCSAVAQGEEGSCGKECVSGCECPTGLFWDGALCVPAAHC. The VWFD 2 domain maps to 565-738; that stretch reads AECAVGGDGH…FQVSGDGRCP (174 aa). 2 disulfides stabilise this stretch: cysteine 567–cysteine 700 and cysteine 591–cysteine 737. N-linked (GlcNAc...) asparagine glycosylation is found at asparagine 657 and asparagine 822. The 54-residue stretch at 830 to 883 folds into the TIL 2 domain; it reads CPGGQVYQECAPACGHYCGEPEDCKELGSCVAGCNCPPGLLWDLEGQCVPPSMC. Residues asparagine 895, asparagine 949, and asparagine 991 are each glycosylated (N-linked (GlcNAc...) asparagine). The VWFD 3 domain maps to 1017–1187; the sequence is GWCQASGAPH…HSWRLNPLCP (171 aa). Cystine bridges form between cysteine 1019-cysteine 1151, cysteine 1041-cysteine 1186, and cysteine 1062-cysteine 1069. The TIL 3 domain maps to 1280 to 1336; the sequence is CEGGQVYEPCGSTCPPTCHDHHPELRWHCQAITCVEGCFCPEGTLLHGGTCVELTDC. Asparagine 1357 carries N-linked (GlcNAc...) asparagine glycosylation. LDL-receptor class A domains are found at residues 1380–1417, 1420–1456, 1456–1492, and 1496–1534; these read GCAE…EGCD, VCGE…QGCL, LCPQ…ESCL, and SCTS…VHCS. 12 cysteine pairs are disulfide-bonded: cysteine 1381–cysteine 1394, cysteine 1388–cysteine 1407, cysteine 1401–cysteine 1416, cysteine 1421–cysteine 1433, cysteine 1428–cysteine 1446, cysteine 1440–cysteine 1455, cysteine 1457–cysteine 1469, cysteine 1464–cysteine 1482, cysteine 1476–cysteine 1491, cysteine 1497–cysteine 1509, cysteine 1504–cysteine 1522, and cysteine 1516–cysteine 1533. Residues 1533-1567 form a disordered region; sequence CSSPSLPTPPAGIGQNPSTSSPDTSPSPVGSASPA. Residues 1549–1567 show a composition bias toward low complexity; the sequence is PSTSSPDTSPSPVGSASPA. LDL-receptor class A domains lie at 1569-1605 and 1607-1646; these read PCSL…LDCG and PCKL…DVCE. 6 disulfides stabilise this stretch: cysteine 1570-cysteine 1582, cysteine 1577-cysteine 1595, cysteine 1589-cysteine 1604, cysteine 1608-cysteine 1621, cysteine 1615-cysteine 1634, and cysteine 1628-cysteine 1645. N-linked (GlcNAc...) asparagine glycosylation is found at asparagine 1655 and asparagine 1668. An LDL-receptor class A 7 domain is found at 1660–1700; it reads PCPEFSCPNGTCIDFLLVCDGSPDCELADETEPSLDEQGCG. 9 disulfides stabilise this stretch: cysteine 1661/cysteine 1671, cysteine 1666/cysteine 1684, cysteine 1678/cysteine 1699, cysteine 1711/cysteine 1747, cysteine 1715/cysteine 1752, cysteine 1726/cysteine 1737, cysteine 1767/cysteine 1964, cysteine 1771/cysteine 1969, and cysteine 1781/cysteine 1791. 2 TSP type-1 domains span residues 1699-1753 and 1755-1970; these read CGTW…EACP and DGEW…EPCE. A glycan (N-linked (GlcNAc...) asparagine) is linked at asparagine 1725. N-linked (GlcNAc...) asparagine glycosylation is present at asparagine 1814. 2 consecutive EGF-like domains span residues 1829–1868 and 1869–1895; these read CPLT…GRCV and RPRQ…CQLC. The 61-residue stretch at 1970–2030 folds into the VWFC 1 domain; it reads EGCEQWGLTY…GMGESCCHCA (61 aa). Residue asparagine 2035 is glycosylated (N-linked (GlcNAc...) asparagine). 4 cysteine pairs are disulfide-bonded: cysteine 2070–cysteine 2226, cysteine 2236–cysteine 2248, cysteine 2243–cysteine 2261, and cysteine 2255–cysteine 2270. The F5/8 type C domain maps to 2070 to 2226; the sequence is CYSPLGLAGL…IFLWVELLGC (157 aa). The segment at 2087–2109 is disordered; it reads PLEHSTRAAPVEAPTAGPGPRED. Asparagine 2130 and asparagine 2148 each carry an N-linked (GlcNAc...) asparagine glycan. The LDL-receptor class A 8 domain maps to 2235 to 2271; sequence LCPGTRHRCANGDCALKGGPCDGAVDCEDGSDEEGCG. The segment at 2262 to 2335 is disordered; that stretch reads EDGSDEEGCG…SPSASEGLLP (74 aa). The span at 2276 to 2294 shows a compositional bias: polar residues; sequence STASRVHSTARTPALSPTQ. The segment covering 2301–2314 has biased composition (basic and acidic residues); it reads HPREGLADMEHQQP. 2 consecutive LDL-receptor class A domains span residues 2391-2427 and 2448-2484; these read RCGP…QHCA and LCSP…DDCV. Intrachain disulfides connect cysteine 2392/cysteine 2404, cysteine 2399/cysteine 2417, cysteine 2411/cysteine 2426, cysteine 2449/cysteine 2461, cysteine 2456/cysteine 2474, cysteine 2468/cysteine 2483, cysteine 2486/cysteine 2522, cysteine 2497/cysteine 2501, cysteine 2532/cysteine 2537, cysteine 2552/cysteine 2589, cysteine 2556/cysteine 2594, and cysteine 2567/cysteine 2579. TSP type-1 domains lie at 2485-2538 and 2540-2595; these read DCVL…QACP and AGAW…QLCP. Residues 2618–2660 form the TIL 4 domain; sequence PPCPPSCLDPEANRSCSGHCVEGCRCPPGLFLQDSHCLPLSEC. N-linked (GlcNAc...) asparagine glycans are attached at residues asparagine 2630 and asparagine 2679. TSP type-1 domains follow at residues 2700 to 2754, 2758 to 2813, and 2815 to 2868; these read SCGW…TDCG, PGWT…SLCP, and PSAW…HPCT. 9 disulfide bridges follow: cysteine 2701–cysteine 2739, cysteine 2712–cysteine 2716, cysteine 2749–cysteine 2753, cysteine 2769–cysteine 2807, cysteine 2773–cysteine 2812, cysteine 2789–cysteine 2797, cysteine 2827–cysteine 2862, cysteine 2831–cysteine 2867, and cysteine 2842–cysteine 2852. N-linked (GlcNAc...) asparagine glycosylation is found at asparagine 2921 and asparagine 2951. TSP type-1 domains lie at 2969-3024 and 3025-3068; these read ACGW…RPCQ and GPGA…QPCA. 3 disulfide bridges follow: cysteine 2970/cysteine 3008, cysteine 2981/cysteine 2985, and cysteine 3018/cysteine 3023. Asparagine 3046, asparagine 3101, asparagine 3148, and asparagine 3158 each carry an N-linked (GlcNAc...) asparagine glycan. In terms of domain architecture, TIL 5 spans 3075–3127; that stretch reads CPKDQQWLDCAQGPASCAHLSTPREANQTCHPGCYCLSGMLLLNNVCVPAQDC. TSP type-1 domains are found at residues 3168-3235 and 3237-3292; these read QPAW…PGCN and AGVW…QPCP. 6 disulfides stabilise this stretch: cysteine 3180-cysteine 3229, cysteine 3184-cysteine 3234, cysteine 3195-cysteine 3219, cysteine 3249-cysteine 3286, cysteine 3253-cysteine 3291, and cysteine 3264-cysteine 3276. Asparagine 3295 carries N-linked (GlcNAc...) asparagine glycosylation. Positions 3300–3350 constitute a TIL 6 domain; the sequence is EGAEYSPCGPPCPRSCDDLVHCMWHCQPGCYCPPGKVLSADGAICVQPHHC. The N-linked (GlcNAc...) asparagine glycan is linked to asparagine 3384. TSP type-1 domains lie at 3393 to 3455 and 3457 to 3512; these read SGDW…TACP and DGAW…TPCT. Disulfide bonds link cysteine 3405–cysteine 3448, cysteine 3409–cysteine 3454, cysteine 3420–cysteine 3432, cysteine 3469–cysteine 3504, cysteine 3472–cysteine 3511, and cysteine 3482–cysteine 3494. Asparagine 3506 carries N-linked (GlcNAc...) asparagine glycosylation. Residues 3514 to 3570 form the TIL 7 domain; that stretch reads CGGGQDLLPCGQPCPHSCQDLSLGSTCQPGSSGCQSGCGCPPGQLSQDGLCVFPADC. Asparagine 3584 and asparagine 3611 each carry an N-linked (GlcNAc...) asparagine glycan. One can recognise a TSP type-1 14 domain in the interval 3630–3678; the sequence is PGIWSSWGPWEKCSVPCGGGEQLRSRQCARPPCPGLAQQSRTCHIHVCR. Disulfide bonds link cysteine 3642-cysteine 3672, cysteine 3646-cysteine 3677, and cysteine 3657-cysteine 3662. An N-linked (GlcNAc...) asparagine glycan is attached at asparagine 3787. TSP type-1 domains are found at residues 3806-3862, 3876-3928, 3942-3998, and 4000-4055; these read RGYF…PECP, AGGW…PSCT, NCFW…RACP, and PGGW…MPCE. Cystine bridges form between cysteine 3818–cysteine 3856, cysteine 3822–cysteine 3861, and cysteine 3834–cysteine 3846. N-linked (GlcNAc...) asparagine glycosylation occurs at asparagine 3910. 6 disulfide bridges follow: cysteine 3943–cysteine 3979, cysteine 3954–cysteine 3958, cysteine 3992–cysteine 3997, cysteine 4012–cysteine 4049, cysteine 4016–cysteine 4054, and cysteine 4027–cysteine 4039. The 56-residue stretch at 4058 to 4113 folds into the TIL 8 domain; it reads CPAGMEMVSCANRCPYSCSDLQEAVMCQEDQACQLGCRCSEGFLEQDGGCVPVGHC. Residue asparagine 4135 is glycosylated (N-linked (GlcNAc...) asparagine). 4 TSP type-1 domains span residues 4155 to 4208, 4249 to 4304, 4306 to 4362, and 4364 to 4418; these read HCAW…DPCP, PGGW…QLCL, LLEI…GPCQ, and DCMW…GNCS. Intrachain disulfides connect cysteine 4156–cysteine 4192, cysteine 4167–cysteine 4171, cysteine 4202–cysteine 4207, cysteine 4261–cysteine 4298, cysteine 4265–cysteine 4303, and cysteine 4276–cysteine 4288. N-linked (GlcNAc...) asparagine glycosylation occurs at asparagine 4345. 3 cysteine pairs are disulfide-bonded: cysteine 4365–cysteine 4402, cysteine 4376–cysteine 4378, and cysteine 4412–cysteine 4417. Residue asparagine 4416 is glycosylated (N-linked (GlcNAc...) asparagine). A TIL 9 domain is found at 4422-4477; that stretch reads CLPPFEFQSCGSPCAGLCATHLSHQLCQDLPPCQPGCYCPMGLLEQDGGCILPEQC. Asparagine 4557 carries an N-linked (GlcNAc...) asparagine glycan. A TSP type-1 23 domain is found at 4608-4659; that stretch reads TCQWGPWGPWSPCQVPCSGGFKLRWREASDNSVGECRGPWAQTESCNMGSCP. Disulfide bonds link cysteine 4609/cysteine 4643, cysteine 4620/cysteine 4624, and cysteine 4653/cysteine 4658. The TIL 10 domain maps to 4673–4719; it reads DCANQCPRSCADLWEGVQCLQGPCSPGCRCPPGQLVQDGHCVPISSC. 3 N-linked (GlcNAc...) asparagine glycosylation sites follow: asparagine 4727, asparagine 4744, and asparagine 4749. In terms of domain architecture, TSP type-1 24 spans 4759–4812; sequence CPVLGPWSPWSECSAVCGGGTMVRYRSCEEHPDSAPCQALDMEQRVECNLQTCP. 3 disulfide bridges follow: cysteine 4771/cysteine 4806, cysteine 4775/cysteine 4811, and cysteine 4786/cysteine 4795. In terms of domain architecture, TIL 11 spans 4814–4868; it reads CPPGQVLSTCATLCPSFCSHLWPGTICVREPCQLGCGCPGGQLLHSGTCIPPEAC. N-linked (GlcNAc...) asparagine glycans are attached at residues asparagine 4899, asparagine 4942, and asparagine 4949. The region spanning 4920-4978 is the TIL 12 domain; it reads CPPGEILQLGELRPCEKTCLEMNKTQAWSNCTEAQVPGCVCQLGHFRSHTGLCVPEDHC. Residues 4978–5036 form the VWFC 2 domain; it reads CECWHHGSPHLPGSEWQEACESCRCLHGKSVCTQHCPELSCAQGEVVVQEPGSCCPICQ. 4 cysteine pairs are disulfide-bonded: cysteine 5047-cysteine 5095, cysteine 5061-cysteine 5112, cysteine 5071-cysteine 5128, and cysteine 5075-cysteine 5130. The CTCK domain maps to 5047 to 5134; that stretch reads CRHLTELRNL…IHNCHCSACQ (88 aa). Asparagine 5055 is a glycosylation site (N-linked (GlcNAc...) asparagine).

It belongs to the thrombospondin family.

The protein localises to the secreted. It is found in the extracellular space. Its function is as follows. Involved in the modulation of neuronal aggregation. May be involved in developmental events during the formation of the central nervous system. In Rattus norvegicus (Rat), this protein is SCO-spondin.